We begin with the raw amino-acid sequence, 245 residues long: 1-(5-phosphoribosyl)-5-[(5-phosphoribosylamino)methylideneamino] imidazole-4-carboxamide isomerase (245 aa).

Residue aspartate 7 is the Proton acceptor of the active site. The active-site Proton donor is aspartate 129.

Belongs to the HisA/HisF family.

The protein resides in the cytoplasm. It carries out the reaction 1-(5-phospho-beta-D-ribosyl)-5-[(5-phospho-beta-D-ribosylamino)methylideneamino]imidazole-4-carboxamide = 5-[(5-phospho-1-deoxy-D-ribulos-1-ylimino)methylamino]-1-(5-phospho-beta-D-ribosyl)imidazole-4-carboxamide. It functions in the pathway amino-acid biosynthesis; L-histidine biosynthesis; L-histidine from 5-phospho-alpha-D-ribose 1-diphosphate: step 4/9. The protein is 1-(5-phosphoribosyl)-5-[(5-phosphoribosylamino)methylideneamino] imidazole-4-carboxamide isomerase of Cronobacter sakazakii (strain ATCC BAA-894) (Enterobacter sakazakii).